Reading from the N-terminus, the 299-residue chain is ATP phosphoribosyltransferase (299 aa).

The protein belongs to the ATP phosphoribosyltransferase family. Long subfamily. As to quaternary structure, equilibrium between an active dimeric form, an inactive hexameric form and higher aggregates. Interconversion between the various forms is largely reversible and is influenced by the natural substrates and inhibitors of the enzyme. Mg(2+) is required as a cofactor.

Its subcellular location is the cytoplasm. The catalysed reaction is 1-(5-phospho-beta-D-ribosyl)-ATP + diphosphate = 5-phospho-alpha-D-ribose 1-diphosphate + ATP. It participates in amino-acid biosynthesis; L-histidine biosynthesis; L-histidine from 5-phospho-alpha-D-ribose 1-diphosphate: step 1/9. Feedback inhibited by histidine. Catalyzes the condensation of ATP and 5-phosphoribose 1-diphosphate to form N'-(5'-phosphoribosyl)-ATP (PR-ATP). Has a crucial role in the pathway because the rate of histidine biosynthesis seems to be controlled primarily by regulation of HisG enzymatic activity. The protein is ATP phosphoribosyltransferase of Blochmanniella floridana.